The chain runs to 898 residues: Protein translocase subunit SecA (898 aa).

ATP contacts are provided by residues Q87, G105–T109, and D512. Polar residues predominate over residues M855–S865. The tract at residues M855–Y898 is disordered. Positions L866–R876 are enriched in basic and acidic residues. Positions 880, 882, 891, and 892 each coordinate Zn(2+). The segment covering K886 to Y898 has biased composition (basic residues).

This sequence belongs to the SecA family. As to quaternary structure, monomer and homodimer. Part of the essential Sec protein translocation apparatus which comprises SecA, SecYEG and auxiliary proteins SecDF-YajC and YidC. Requires Zn(2+) as cofactor.

Its subcellular location is the cell inner membrane. The protein localises to the cytoplasm. The enzyme catalyses ATP + H2O + cellular proteinSide 1 = ADP + phosphate + cellular proteinSide 2.. Its function is as follows. Part of the Sec protein translocase complex. Interacts with the SecYEG preprotein conducting channel. Has a central role in coupling the hydrolysis of ATP to the transfer of proteins into and across the cell membrane, serving both as a receptor for the preprotein-SecB complex and as an ATP-driven molecular motor driving the stepwise translocation of polypeptide chains across the membrane. This chain is Protein translocase subunit SecA, found in Histophilus somni (strain 2336) (Haemophilus somnus).